The following is a 561-amino-acid chain: Potassium-transporting ATPase potassium-binding subunit (561 aa).

The next 11 helical transmembrane spans lie at 5–25 (LAAG…YVPL), 60–80 (CGYA…LYVL), 86–106 (VLPL…NTAV), 131–151 (GLAV…VALI), 177–197 (ILLP…VIQS), 247–267 (PTPL…VALT), 281–301 (LTVL…TTAA), 376–396 (GLYG…LLVG), 415–435 (ALAV…TVVL), 489–509 (LGLC…ALAG), and 531–551 (FAGL…FPVL).

Belongs to the KdpA family. The system is composed of three essential subunits: KdpA, KdpB and KdpC.

Its subcellular location is the cell membrane. In terms of biological role, part of the high-affinity ATP-driven potassium transport (or Kdp) system, which catalyzes the hydrolysis of ATP coupled with the electrogenic transport of potassium into the cytoplasm. This subunit binds the extracellular potassium ions and delivers the ions to the membrane domain of KdpB through an intramembrane tunnel. This chain is Potassium-transporting ATPase potassium-binding subunit, found in Nocardia farcinica (strain IFM 10152).